A 690-amino-acid chain; its full sequence is Signal peptide peptidase-like 2C (690 aa).

The first 28 residues, 1-28 (MACLGSLHPLGSLLLLFLLLLLSPEARG), serve as a signal peptide directing secretion. The Lumenal portion of the chain corresponds to 29-192 (EYGLVRVVSK…APLEPVTDYN (164 aa)). The region spanning 87 to 166 (DSSPRQRPLH…AVLRYTDMLD (80 aa)) is the PA domain. Residue N106 is glycosylated (N-linked (GlcNAc...) asparagine). A helical membrane pass occupies residues 193 to 213 (MAIIFILAVGTVAAGGYWAGL). Residues 214–260 (MEANKLQRRQAQRGGGLGGHNQQQTVAAERSQRAWEDDDFEDAPMDF) lie on the Cytoplasmic side of the membrane. Residues 261–283 (TPAMTGAVVTMSCSIMILLYFFY) form a helical membrane-spanning segment. Residue D284 is a topological domain, lumenal. Residues 285–307 (CFVYVMIGIFSLGASTGLYSCLA) traverse the membrane as a helical segment. Over 308 to 328 (PILCHLPLWRYQWVLPGQRVS) the chain is Cytoplasmic. Residues 329 to 349 (VTWPLLLLAGLCAMVTVLWVI) traverse the membrane as a helical segment. Residues 350-354 (HRNED) are Lumenal-facing. A helical transmembrane segment spans residues 355-373 (HWAWLLQDTLGVAYCLFVL). Residues 374 to 384 (RRVRLPTFKNC) lie on the Cytoplasmic side of the membrane. A helical transmembrane segment spans residues 385–405 (TLFLLALLAFDVFFVFITPLF). D395 is a catalytic residue. Residues 406-448 (TKTGESIMVEVASGPADSSSHERLPMVLKVPRLSFSALTLCNQ) lie on the Lumenal side of the membrane. A helical transmembrane segment spans residues 449–469 (PFSILGFGDIVVPGFLVAYCH). The active site involves D457. Topologically, residues 470-482 (RFDMQVQSRQVYY) are cytoplasmic. A helical transmembrane segment spans residues 483–503 (MACTVAYAVGLLVTFVAMILM). A topological domain (lumenal) is located at residue Q504. The chain crosses the membrane as a helical span at residues 505 to 525 (MGQPALLYLVSSTLLTSLAVA). The PAL signature appears at 508 to 510 (PAL). Topologically, residues 526–690 (TCRQEFTLFW…KKSMSAQAPL (165 aa)) are cytoplasmic. Residues 564–573 (EDAKDSRTTN) show a composition bias toward basic and acidic residues. Positions 564–633 (EDAKDSRTTN…DPNELPSGSP (70 aa)) are disordered. Polar residues predominate over residues 615–624 (SEGWSDTNLD).

The protein belongs to the peptidase A22B family. In terms of assembly, interacts (via active sites) with FREY; the interaction stabilizes FREY1 protein and inhibits SPPL2C proteolytic activity. In terms of processing, glycosylated. In terms of tissue distribution, highly expressed in testis where it is primarily localised in spermatids (at protein level).

The protein localises to the endoplasmic reticulum membrane. Its function is as follows. Sperm-specific intramembrane-cleaving aspartic protease (I-CLiP) that cleaves distinct tail-anchored proteins and SNARE proteins. In elongated spermatids, modulates intracellular Ca(2+) homeostasis by controlling PLN abundance through proteolytic cleavage. During spermatogenesis, processes SNARE proteins and impacts vesicular trafficking which supports compartmental reorganization in maturating spermatids and may play a role in formation of the acrosome. Functionally, in round spermatids, acts as a scaffold protein supporting FREY1 in IZUMO1 recruitment at the endoplasmic reticulum membrane and coordination of IZUMO1 complex assembly. Stabilizes FREY1 at the endoplasmic reticulum membrane through interaction. May recruit IZUMO1 interaction partners. In terms of biological role, no difference in cleavage specificity compared to isoform 1. The chain is Signal peptide peptidase-like 2C from Mus musculus (Mouse).